Here is a 663-residue protein sequence, read N- to C-terminus: Protein LNK2 (663 aa).

Disordered regions lie at residues 528–549 and 590–663; these read HYTS…VIPR and MEGP…KRKL. Residues 602 to 629 are compositionally biased toward basic and acidic residues; sequence GTEEKGNFPKCSIRETHLTKQKAQKEEG. Residues 639-648 show a composition bias toward polar residues; it reads APNSGSSSTV.

Interacts with CCA1, LHY, REV4 and REV8, but not with PRR7 or PRR9. In terms of tissue distribution, expressed in roots, stems, leaves, seedlings, cotyledons, inflorescences and siliques. Highest expression in root tips, young leaves and vasculatur tissues.

The protein resides in the nucleus. Transcriptional coactivator necessary for expression of the clock genes PRR5 and TOC1. Antagonizes REV8 function in the regulation of anthocyanin accumulation. Involved in red light input to the clock. Activates clock-controlled genes with afternoon peak. Mediates light inhibition of hypocotyl elongation. Unable to bind to DNA, but recruited to the evening element (EE)-containing region of the PRR5 and TOC1 promoters through its interaction with the DNA binding proteins REV8 and REV4. This is Protein LNK2 from Arabidopsis thaliana (Mouse-ear cress).